The sequence spans 232 residues: 26.5 kDa heat shock protein, mitochondrial (232 aa).

The N-terminal 42 residues, 1-42 (MALARLALRNLQQKLSPSLMGQSCERGLVGNRHNPMKLNRFM), are a transit peptide targeting the mitochondrion. The disordered stretch occupies residues 44 to 82 (TSAGEQEDKMNTEVSVSEKKSPRQNFPRRRGRKSLWRNT). Over residues 49–64 (QEDKMNTEVSVSEKKS) the composition is skewed to basic and acidic residues. The segment covering 69-78 (FPRRRGRKSL) has biased composition (basic residues). The 119-residue stretch at 114-232 (IFDNFNVNPF…KKNVQEISVE (119 aa)) folds into the sHSP domain.

This sequence belongs to the small heat shock protein (HSP20) family. In terms of assembly, may form oligomeric structures.

The protein localises to the mitochondrion. This chain is 26.5 kDa heat shock protein, mitochondrial (HSP26.5), found in Arabidopsis thaliana (Mouse-ear cress).